The sequence spans 168 residues: Iron-sulfur cluster assembly enzyme ISCU (168 aa).

Residues 1-35 (MAAATGAGRLRRAASALLLRSPRLPARELSAPARL) constitute a mitochondrion transit peptide. Ser-15 is modified (phosphoserine). The active-site Cysteine persulfide intermediate is Cys-70. Residue Cys-70 is modified to Cysteine persulfide. Residues Asp-72, Cys-96, and Cys-139 each coordinate Zn(2+). Cys-139 (cysteine persulfide intermediate) is an active-site residue. At Cys-139 the chain carries Cysteine persulfide.

It belongs to the NifU family. As to quaternary structure, homodimer; Tyr-36-mediated dimerization of two iron- and sulfide-containing ISCU subunit bind to the cysteine desulfurase complex. Component of the mitochondrial core iron-sulfur cluster (ISC) complex composed of NFS1, LYRM4, NDUFAB1, ISCU, FXN, and FDX2; this complex is a heterohexamer containing two copies of each monomer. Interacts (D-state) with NFS1 (homodimer form); each monomer interacts with the C-terminal regions of each NFS1 monomer. Interacts (monomer form) with FXN (via ferrous form); the interaction is possible when both are bound to the dimeric form of the cysteine desulfurase complex (NFS1:LYRM4) and enhances FXN interaction to the dimeric form of the cysteine desulfurase complex (NFS1:LYRM4). Interacts with GLRX5. Interacts (D-state) with HSPA9. Interacts (S-state) with HSCB; this interaction stimulates the ATPase activity of HSPA9. Component of a complex composed of FXN, NFS1, LYRM4 and ISCU. Cysteine persulfide is reduced by thiol-containing molecules such as glutathione and L-cysteine. In terms of processing, phosphorylation at Ser-15 is required for ISCU protein stabilization in the cytosol, whereas dephosphorylation of Ser-15, due to the inhibition of mTORC1 (mammalian target of rapamycin complex 1) complex, leads to degradation of the precursor form and ultimately to a decrease in the mitochondrial mature form.

The protein resides in the mitochondrion. Its function is as follows. Mitochondrial scaffold protein, of the core iron-sulfur cluster (ISC) assembly complex, that provides the structural architecture on which the [2Fe-2S] clusters are assembled. The core iron-sulfur cluster (ISC) assembly complex is involved in the de novo synthesis of a [2Fe-2S] cluster, the first step of the mitochondrial iron-sulfur protein biogenesis. This process is initiated by the cysteine desulfurase complex (NFS1:LYRM4:NDUFAB1) that produces persulfide which is delivered on the scaffold protein ISCU in a FXN-dependent manner. Then this complex is stabilized by FDX2 which provides reducing equivalents to accomplish the [2Fe-2S] cluster assembly. Finally, the [2Fe-2S] cluster is transferred from ISCU to chaperone proteins, including HSCB, HSPA9 and GLRX5. Exists as two slow interchanging conformational states, a structured (S) and disordered (D) form. May modulate NFS1 desulfurase activity in a zinc-dependent manner. Modulates the interaction between FXN and the cysteine desulfurase complex. In Mus musculus (Mouse), this protein is Iron-sulfur cluster assembly enzyme ISCU.